Consider the following 629-residue polypeptide: tRNA uridine 5-carboxymethylaminomethyl modification enzyme MnmG (629 aa).

FAD is bound by residues 13–18 (GGGHAG), Val125, and Ser180. Position 273 to 287 (273 to 287 (GPRYCPSIEDKVMRF)) interacts with NAD(+). Residue Gln370 coordinates FAD.

It belongs to the MnmG family. Homodimer. Heterotetramer of two MnmE and two MnmG subunits. FAD is required as a cofactor.

It is found in the cytoplasm. Functionally, NAD-binding protein involved in the addition of a carboxymethylaminomethyl (cmnm) group at the wobble position (U34) of certain tRNAs, forming tRNA-cmnm(5)s(2)U34. The chain is tRNA uridine 5-carboxymethylaminomethyl modification enzyme MnmG from Shigella dysenteriae serotype 1 (strain Sd197).